The primary structure comprises 100 residues: MIREERLLKVILAPHISEKSTVVAEKTNTVVFRVAIDATKSEIKAAVEKLFEVEVAGVRTLINKGKTKRHGARVGRRSDWKKAYVTLAAGADIDFVGAEA.

This sequence belongs to the universal ribosomal protein uL23 family. As to quaternary structure, part of the 50S ribosomal subunit. Contacts protein L29, and trigger factor when it is bound to the ribosome.

One of the early assembly proteins it binds 23S rRNA. One of the proteins that surrounds the polypeptide exit tunnel on the outside of the ribosome. Forms the main docking site for trigger factor binding to the ribosome. In Shewanella amazonensis (strain ATCC BAA-1098 / SB2B), this protein is Large ribosomal subunit protein uL23.